A 101-amino-acid polypeptide reads, in one-letter code: Small ribosomal subunit protein uS14 (101 aa).

This sequence belongs to the universal ribosomal protein uS14 family. In terms of assembly, part of the 30S ribosomal subunit. Contacts proteins S3 and S10.

In terms of biological role, binds 16S rRNA, required for the assembly of 30S particles and may also be responsible for determining the conformation of the 16S rRNA at the A site. The sequence is that of Small ribosomal subunit protein uS14 from Xylella fastidiosa (strain M23).